The following is a 449-amino-acid chain: Deoxyguanosinetriphosphate triphosphohydrolase-like protein (449 aa).

The disordered stretch occupies residues 1 to 27; sequence MTSSVWQERRHGEDKQRRNDHRSPYQR. Over residues 7 to 27 the composition is skewed to basic and acidic residues; that stretch reads QERRHGEDKQRRNDHRSPYQR. Residues 59–255 form the HD domain; that stretch reads RLTHSLEVSQ…MELADDIAYA (197 aa).

This sequence belongs to the dGTPase family. Type 2 subfamily.

The chain is Deoxyguanosinetriphosphate triphosphohydrolase-like protein from Shewanella baltica (strain OS185).